Here is a 514-residue protein sequence, read N- to C-terminus: DNA damage-binding protein CMR1 (514 aa).

A disordered region spans residues 26-116 (NLDSLSQSIK…VKQEEKEELS (91 aa)). Residues 34-44 (IKRELPRASET) show a composition bias toward basic and acidic residues. Residues 45–55 (KKRKTTPRTKA) show a composition bias toward basic residues. 2 stretches are compositionally biased toward basic and acidic residues: residues 56–65 (VKKEDVEPSR) and 92–116 (KFED…EELS). WD repeat units lie at residues 180–221 (ISHT…DDSE), 229–269 (PHGK…STEV), 280–320 (DYAL…KPLK), 327–367 (LHDK…KANA), 385–423 (SSRL…LIPD), 438–481 (GRWV…IAHL), and 483–514 (DSVG…YLFE).

It belongs to the WD repeat DDB2/WDR76 family.

Its function is as follows. DNA-binding protein that binds to both single- and double-stranded DNA. Binds preferentially to UV-damaged DNA. May be involved in DNA-metabolic processes. In Scheffersomyces stipitis (strain ATCC 58785 / CBS 6054 / NBRC 10063 / NRRL Y-11545) (Yeast), this protein is DNA damage-binding protein CMR1 (PRW1).